Here is a 441-residue protein sequence, read N- to C-terminus: Gamma-glutamyl phosphate reductase (441 aa).

It belongs to the gamma-glutamyl phosphate reductase family.

Its subcellular location is the cytoplasm. The catalysed reaction is L-glutamate 5-semialdehyde + phosphate + NADP(+) = L-glutamyl 5-phosphate + NADPH + H(+). The protein operates within amino-acid biosynthesis; L-proline biosynthesis; L-glutamate 5-semialdehyde from L-glutamate: step 2/2. Functionally, catalyzes the NADPH-dependent reduction of L-glutamate 5-phosphate into L-glutamate 5-semialdehyde and phosphate. The product spontaneously undergoes cyclization to form 1-pyrroline-5-carboxylate. This is Gamma-glutamyl phosphate reductase from Hydrogenobaculum sp. (strain Y04AAS1).